A 164-amino-acid chain; its full sequence is Transcriptional repressor NrdR (164 aa).

Residues 3-34 fold into a zinc finger; that stretch reads CPKCNYHKSSVVDSRQAEDGNTIRRRRECEQC. Positions 49 to 139 constitute an ATP-cone domain; that stretch reads LLVIKKDGTR…VYKSFKDVDE (91 aa).

It belongs to the NrdR family. Requires Zn(2+) as cofactor.

In terms of biological role, negatively regulates transcription of bacterial ribonucleotide reductase nrd genes and operons by binding to NrdR-boxes. This is Transcriptional repressor NrdR from Streptococcus pyogenes serotype M6 (strain ATCC BAA-946 / MGAS10394).